Here is a 919-residue protein sequence, read N- to C-terminus: Probable glucan 1,3-alpha-glucosidase (919 aa).

A signal peptide spans 1–28; it reads MDPPPRPRPHRVAVLLLLLLASSPAARA. Asp510 functions as the Nucleophile in the catalytic mechanism. Residue Glu513 is part of the active site. Asp586 acts as the Proton donor in catalysis. Asn802 is a glycosylation site (N-linked (GlcNAc...) asparagine).

This sequence belongs to the glycosyl hydrolase 31 family. As to quaternary structure, heterodimer of a catalytic alpha subunit and a beta subunit.

It is found in the endoplasmic reticulum. It carries out the reaction N(4)-(alpha-D-Glc-(1-&gt;3)-alpha-D-Man-(1-&gt;2)-alpha-D-Man-(1-&gt;2)-alpha-D-Man-(1-&gt;3)-[alpha-D-Man-(1-&gt;2)-alpha-D-Man-(1-&gt;3)-[alpha-D-Man-(1-&gt;2)-alpha-D-Man-(1-&gt;6)]-alpha-D-Man-(1-&gt;6)]-beta-D-Man-(1-&gt;4)-beta-D-GlcNAc-(1-&gt;4)-beta-D-GlcNAc)-L-asparaginyl-[protein] + H2O = N(4)-(alpha-D-Man-(1-&gt;2)-alpha-D-Man-(1-&gt;2)-alpha-D-Man-(1-&gt;3)-[alpha-D-Man-(1-&gt;2)-alpha-D-Man-(1-&gt;3)-[alpha-D-Man-(1-&gt;2)-alpha-D-Man-(1-&gt;6)]-alpha-D-Man-(1-&gt;6)]-beta-D-Man-(1-&gt;4)-beta-D-GlcNAc-(1-&gt;4)-beta-D-GlcNAc)-L-asparaginyl-[protein] (N-glucan mannose isomer 9A1,2,3B1,2,3) + beta-D-glucose. The enzyme catalyses N(4)-(alpha-D-Glc-(1-&gt;3)-alpha-D-Glc-(1-&gt;3)-alpha-D-Man-(1-&gt;2)-alpha-D-Man-(1-&gt;2)-alpha-D-Man-(1-&gt;3)-[alpha-D-Man-(1-&gt;2)-alpha-D-Man-(1-&gt;3)-[alpha-D-Man-(1-&gt;2)-alpha-D-Man-(1-&gt;6)]-alpha-D-Man-(1-&gt;6)]-beta-D-Man-(1-&gt;4)-beta-D-GlcNAc-(1-&gt;4)-beta-D-GlcNAc)-L-asparaginyl-[protein] + H2O = N(4)-(alpha-D-Glc-(1-&gt;3)-alpha-D-Man-(1-&gt;2)-alpha-D-Man-(1-&gt;2)-alpha-D-Man-(1-&gt;3)-[alpha-D-Man-(1-&gt;2)-alpha-D-Man-(1-&gt;3)-[alpha-D-Man-(1-&gt;2)-alpha-D-Man-(1-&gt;6)]-alpha-D-Man-(1-&gt;6)]-beta-D-Man-(1-&gt;4)-beta-D-GlcNAc-(1-&gt;4)-beta-D-GlcNAc)-L-asparaginyl-[protein] + beta-D-glucose. Its pathway is glycan metabolism; N-glycan metabolism. In terms of biological role, cleaves sequentially the 2 innermost alpha-1,3-linked glucose residues from the Glc(2)Man(9)GlcNAc(2) oligosaccharide precursor of immature glycoproteins. May be required for defense response elicited by pathogen-associated molecular patterns (PAMPs). The protein is Probable glucan 1,3-alpha-glucosidase of Oryza sativa subsp. japonica (Rice).